The following is a 62-amino-acid chain: Bacteriocin piscicolin-126 (62 aa).

Residues 1–18 (MKTVKELSVKEMQLTTGG) constitute a propeptide that is removed on maturation. A disulfide bridge connects residues C27 and C32.

Its subcellular location is the secreted. Its function is as follows. Inhibits the growth of several Gram-positive bacteria, especially the food-borne pathogen L.monocytogenes, but has no effect on the growth of a number of yeasts and Gram-negative bacteria. The chain is Bacteriocin piscicolin-126 (pisA) from Carnobacterium maltaromaticum (Carnobacterium piscicola).